A 161-amino-acid polypeptide reads, in one-letter code: MLMPVHFLLLLLLLLGGPRTGLPHKFYKAKPIFSCLNTALSEAEKGQWEDASLLSKRSFHYLRSRDASSGEEEEGKEKKTFPISGARGGARGTRYRYVSQAQPRGKPRQDTAKSPHRTKFTLSLDVPTNIMNLLFNIAKAKNLRAQAAANAHLMAQIGRKK.

Residues 1–21 (MLMPVHFLLLLLLLLGGPRTG) form the signal peptide. A propeptide spanning residues 22-118 (LPHKFYKAKP…QDTAKSPHRT (97 aa)) is cleaved from the precursor. The disordered stretch occupies residues 64–118 (SRDASSGEEEEGKEKKTFPISGARGGARGTRYRYVSQAQPRGKPRQDTAKSPHRT). Ile157 is subject to Isoleucine amide.

It belongs to the sauvagine/corticotropin-releasing factor/urotensin I family. In terms of assembly, binds with high affinity to CRF receptors 2-alpha and 2-beta.

It is found in the secreted. In terms of biological role, suppresses food intake, delays gastric emptying and decreases heat-induced edema. Might represent an endogenous ligand for maintaining homeostasis after stress. The polypeptide is Urocortin-3 (UCN3) (Homo sapiens (Human)).